A 295-amino-acid chain; its full sequence is Probable phosphoglycerate mutase PMU1 (295 aa).

His-61 acts as the Tele-phosphohistidine intermediate in catalysis. Glu-170 (proton donor/acceptor) is an active-site residue.

This sequence belongs to the phosphoglycerate mutase family.

Its subcellular location is the cytoplasm. It localises to the nucleus. Its function is as follows. Probable phosphomutase that may have a function related to the manipulation of phosphate groups on carbohydrates. Reduces trehalose-6-phosphate levels when overexpressed in TPS2-deleted cells. Reduces 5'-Phosphoribosyl-4-carboxamide-5-aminoimidazole (AICAR) levels, a metabolic intermediate at the crossroads between AMP and histidine biosynthesis pathways, when overexpressed in a ADE3-ADE16-ADE17 triple deletant. The sequence is that of Probable phosphoglycerate mutase PMU1 from Saccharomyces cerevisiae (strain ATCC 204508 / S288c) (Baker's yeast).